Reading from the N-terminus, the 391-residue chain is Phosphopentomutase (391 aa).

Aspartate 14 is a binding site for Mn(2+). The interval 61-88 is disordered; it reads IQGVPPDPAPTAFHGRMAERSEGKDTTT. A compositionally biased stretch (basic and acidic residues) spans 76–87; that stretch reads RMAERSEGKDTT. Mn(2+) contacts are provided by aspartate 286, histidine 291, aspartate 327, histidine 328, and histidine 339.

The protein belongs to the phosphopentomutase family. Mn(2+) serves as cofactor.

The protein localises to the cytoplasm. The catalysed reaction is 2-deoxy-alpha-D-ribose 1-phosphate = 2-deoxy-D-ribose 5-phosphate. The enzyme catalyses alpha-D-ribose 1-phosphate = D-ribose 5-phosphate. The protein operates within carbohydrate degradation; 2-deoxy-D-ribose 1-phosphate degradation; D-glyceraldehyde 3-phosphate and acetaldehyde from 2-deoxy-alpha-D-ribose 1-phosphate: step 1/2. Isomerase that catalyzes the conversion of deoxy-ribose 1-phosphate (dRib-1-P) and ribose 1-phosphate (Rib-1-P) to deoxy-ribose 5-phosphate (dRib-5-P) and ribose 5-phosphate (Rib-5-P), respectively. The polypeptide is Phosphopentomutase (Anaeromyxobacter dehalogenans (strain 2CP-C)).